A 337-amino-acid polypeptide reads, in one-letter code: DNA-directed RNA polymerase subunit alpha (337 aa).

Residues 1 to 223 (MLISQRPALT…ELFGLAQELN (223 aa)) form an alpha N-terminal domain (alpha-NTD) region. Positions 238–337 (SEHIAAYSMP…IDTEGEDIAE (100 aa)) are alpha C-terminal domain (alpha-CTD).

This sequence belongs to the RNA polymerase alpha chain family. As to quaternary structure, homodimer. The RNAP catalytic core consists of 2 alpha, 1 beta, 1 beta' and 1 omega subunit. When a sigma factor is associated with the core the holoenzyme is formed, which can initiate transcription.

It catalyses the reaction RNA(n) + a ribonucleoside 5'-triphosphate = RNA(n+1) + diphosphate. Its function is as follows. DNA-dependent RNA polymerase catalyzes the transcription of DNA into RNA using the four ribonucleoside triphosphates as substrates. This is DNA-directed RNA polymerase subunit alpha from Corynebacterium jeikeium (strain K411).